We begin with the raw amino-acid sequence, 325 residues long: Lactonase drp35 (325 aa).

Glu46, Thr108, Gly110, Asp128, Thr131, Tyr133, Asp136, Asn183, Asp234, and Ser235 together coordinate Ca(2+). Residue Asp234 is the Proton donor of the active site.

Belongs to the SMP-30/CGR1 family. The cofactor is Ca(2+).

Its subcellular location is the cytoplasm. Exhibits lactonase activity. Acts in cells with perturbed membrane integrity and is possibly related to the membrane homeostasis. The chain is Lactonase drp35 (drp35) from Staphylococcus epidermidis (strain ATCC 12228 / FDA PCI 1200).